The primary structure comprises 87 residues: MVFLLCFFLVADVSYGINKDCLLPKVVGFCRARFPRYYYNSSSRRCEKFIYGGCGGNANNFSSYYECHIKCFGPRAIIFPEDSPKEN.

The first 16 residues, methionine 1–glycine 16, serve as a signal peptide directing secretion. One can recognise a BPTI/Kunitz inhibitor domain in the interval cysteine 21 to cysteine 71. 3 cysteine pairs are disulfide-bonded: cysteine 21–cysteine 71, cysteine 30–cysteine 54, and cysteine 46–cysteine 67. A propeptide spanning residues alanine 76–asparagine 87 is cleaved from the precursor.

The protein belongs to the venom Kunitz-type family. Sea anemone type 2 potassium channel toxin subfamily.

It is found in the secreted. The protein localises to the nematocyst. In terms of biological role, kunitz peptide that directly activates neuronal GIRK1/2 (KCNJ3/KCNJ6) channels (EC(50)=80.9 uM) resulting in larger K+ currents. This activation is independent from Gi/o protein activity, and has only a minor effect on Kv1.6/KCNA6 channels (13.5% inhibition at 1 uM). Serine protease inhibitor that inhibits both tissue and plasma kallikreins. Has hemolytic activity. This Anemonia viridis (Snakelocks anemone) protein is U-actitoxin-Avd3n.